The primary structure comprises 273 residues: Zinc finger protein 32 (273 aa).

3 consecutive C2H2-type zinc fingers follow at residues 77-99 (YECQ…ERIH), 105-127 (FECT…QRIH), and 133-155 (YQCK…ERLH). Zn(2+) is bound by residues C79, C82, H95, H99, C107, C110, H123, H127, S141, Q144, G157, Y161, F198, K201, L214, A218, C247, C250, H263, and C267. C2H2-type zinc fingers lie at residues 161–183 (YECA…RRVH) and 189–211 (YRCD…IRVH). Residues 217 to 239 (YACTQCRKSFHTRGNCILHGKIH) form a C2H2-type 6 zinc finger. The CCHC-type zinc-finger motif lies at 245-267 (YLCGQCGKSFTQRGSLAVHQRSC).

This sequence belongs to the krueppel C2H2-type zinc-finger protein family.

It localises to the nucleus. May be involved in transcriptional regulation. This Homo sapiens (Human) protein is Zinc finger protein 32 (ZNF32).